The primary structure comprises 314 residues: DegV domain-containing protein XAC3508 (314 aa).

One can recognise a DegV domain in the interval 3 to 307; the sequence is IGIVVDSACD…KGALAVGFAA (305 aa). 2 residues coordinate hexadecanoate: Thr63 and Ser96.

May bind long-chain fatty acids, such as palmitate, and may play a role in lipid transport or fatty acid metabolism. This chain is DegV domain-containing protein XAC3508, found in Xanthomonas axonopodis pv. citri (strain 306).